The chain runs to 190 residues: Adenine phosphoribosyltransferase (190 aa).

The protein belongs to the purine/pyrimidine phosphoribosyltransferase family. In terms of assembly, homodimer.

It is found in the cytoplasm. The catalysed reaction is AMP + diphosphate = 5-phospho-alpha-D-ribose 1-diphosphate + adenine. It functions in the pathway purine metabolism; AMP biosynthesis via salvage pathway; AMP from adenine: step 1/1. Functionally, catalyzes a salvage reaction resulting in the formation of AMP, that is energically less costly than de novo synthesis. The protein is Adenine phosphoribosyltransferase of Treponema denticola (strain ATCC 35405 / DSM 14222 / CIP 103919 / JCM 8153 / KCTC 15104).